The following is a 308-amino-acid chain: Ribosomal RNA large subunit methyltransferase F (308 aa).

It belongs to the methyltransferase superfamily. METTL16/RlmF family.

It localises to the cytoplasm. The enzyme catalyses adenosine(1618) in 23S rRNA + S-adenosyl-L-methionine = N(6)-methyladenosine(1618) in 23S rRNA + S-adenosyl-L-homocysteine + H(+). Its function is as follows. Specifically methylates the adenine in position 1618 of 23S rRNA. The protein is Ribosomal RNA large subunit methyltransferase F of Escherichia coli O6:H1 (strain CFT073 / ATCC 700928 / UPEC).